Reading from the N-terminus, the 445-residue chain is Phosphoglucosamine mutase (445 aa).

The active-site Phosphoserine intermediate is the Ser-102. The Mg(2+) site is built by Ser-102, Asp-241, Asp-243, and Asp-245. Residue Ser-102 is modified to Phosphoserine.

This sequence belongs to the phosphohexose mutase family. The cofactor is Mg(2+). Post-translationally, activated by phosphorylation.

It catalyses the reaction alpha-D-glucosamine 1-phosphate = D-glucosamine 6-phosphate. Its function is as follows. Catalyzes the conversion of glucosamine-6-phosphate to glucosamine-1-phosphate. The sequence is that of Phosphoglucosamine mutase from Shigella dysenteriae serotype 1 (strain Sd197).